The primary structure comprises 1435 residues: DNA polymerase III PolC-type (1435 aa).

Residues 404–562 (YVVYDIETTG…YDSSVLTNIF (159 aa)) enclose the Exonuclease domain.

The protein belongs to the DNA polymerase type-C family. PolC subfamily.

The protein resides in the cytoplasm. It carries out the reaction DNA(n) + a 2'-deoxyribonucleoside 5'-triphosphate = DNA(n+1) + diphosphate. Required for replicative DNA synthesis. This DNA polymerase also exhibits 3' to 5' exonuclease activity. The sequence is that of DNA polymerase III PolC-type from Mycoplasmopsis pulmonis (strain UAB CTIP) (Mycoplasma pulmonis).